The primary structure comprises 290 residues: Purine nucleoside phosphorylase (290 aa).

Residue 68–69 (RN) coordinates phosphate. Met204 is a binding site for substrate. Residue Thr205 participates in phosphate binding.

It belongs to the PNP/MTAP phosphorylase family. MTAP subfamily. In terms of assembly, homotrimer.

It is found in the cytoplasm. The protein localises to the nucleus. The catalysed reaction is a purine D-ribonucleoside + phosphate = a purine nucleobase + alpha-D-ribose 1-phosphate. Its pathway is purine metabolism; purine nucleoside salvage. Functionally, purine nucleoside phosphorylase involved in purine salvage. This Drosophila melanogaster (Fruit fly) protein is Purine nucleoside phosphorylase.